The sequence spans 78 residues: D-alanyl carrier protein (78 aa).

Residues 1–78 form the Carrier domain; that stretch reads MEFREQVLNL…KIVEALEELR (78 aa). S36 bears the O-(pantetheine 4'-phosphoryl)serine mark.

It belongs to the DltC family. Post-translationally, 4'-phosphopantetheine is transferred from CoA to a specific serine of apo-DCP.

The protein resides in the cytoplasm. It functions in the pathway cell wall biogenesis; lipoteichoic acid biosynthesis. In terms of biological role, carrier protein involved in the D-alanylation of lipoteichoic acid (LTA). The loading of thioester-linked D-alanine onto DltC is catalyzed by D-alanine--D-alanyl carrier protein ligase DltA. The DltC-carried D-alanyl group is further transferred to cell membrane phosphatidylglycerol (PG) by forming an ester bond, probably catalyzed by DltD. D-alanylation of LTA plays an important role in modulating the properties of the cell wall in Gram-positive bacteria, influencing the net charge of the cell wall. The chain is D-alanyl carrier protein from Staphylococcus aureus (strain Mu50 / ATCC 700699).